Reading from the N-terminus, the 419-residue chain is Transcription termination factor Rho (419 aa).

In terms of domain architecture, Rho RNA-BD spans 48 to 123; the sequence is DIFGDGVLEI…LKVNEVNYDK (76 aa). 3 RNA-binding regions span residues 61-66, 78-80, and 108-110; these read GFGFLR, DIY, and ERY. ATP-binding positions include 169-174, 181-186, and Arg-212; these read GRGQRG and KAGKTM. The interval 284-288 is RNA-binding 2; it reads VLTGG.

The protein belongs to the Rho family. Homohexamer. The homohexamer assembles into an open ring structure.

In terms of biological role, facilitates transcription termination by a mechanism that involves Rho binding to the nascent RNA, activation of Rho's RNA-dependent ATPase activity, and release of the mRNA from the DNA template. This Salmonella typhi protein is Transcription termination factor Rho.